The primary structure comprises 540 residues: MLO protein homolog 1 (540 aa).

Over 1-16 (MAGGRSGSRELPETPT) the chain is Extracellular. The helical transmembrane segment at 17 to 37 (WAVAVVCAVLVLVSAAMEHGL) threads the bilayer. Over 38–60 (HNLSHWFRRRQKKAMGDALDKIK) the chain is Cytoplasmic. A helical membrane pass occupies residues 61–81 (AELMLLGFISLLLTVAQAPIS). The Extracellular portion of the chain corresponds to 82-142 (KICIPKSAAN…MSAKSMHQLH (61 aa)). Residues 143–163 (IFIFVLAVFHVTYCIITMGLG) form a helical membrane-spanning segment. The Cytoplasmic portion of the chain corresponds to 164 to 265 (RLKMKKWKKW…IKRSLEDDFK (102 aa)). A helical membrane pass occupies residues 266 to 286 (VVVGISLPLWFVGILVLFLDI). Residue His-287 is a topological domain, extracellular. Residues 288-308 (GLGTLIWISFVPLIIVLLVGT) form a helical membrane-spanning segment. Residues 309-347 (KLEMVIMEMAQEIQDRATVIQGAPMVEPSNKYFWFNRPD) lie on the Cytoplasmic side of the membrane. Residues 348–368 (WVLFFIHLTLFHNAFQMAHFV) form a helical membrane-spanning segment. The Extracellular segment spans residues 369 to 383 (WTMATPGLKKCFHEN). Residues 384–404 (IWLSIVEVIVGISLQVLCSYI) traverse the membrane as a helical segment. Residues 405–540 (TFPLYALVTQ…DSDFSFSAQR (136 aa)) lie on the Cytoplasmic side of the membrane. The tract at residues 426–447 (EQTMKALMNWRKKAMEKKKVRD) is calmodulin-binding. The disordered stretch occupies residues 468 to 526 (ASPVHLLQDHRARSDDPPSPITVASPPAPEEDMYPVPAAAASRQLLDDPPDRRWMASSS). Basic and acidic residues-rich tracts occupy residues 474-483 (LQDHRARSDD) and 512-521 (LLDDPPDRRW).

Belongs to the MLO family.

Its subcellular location is the membrane. Its function is as follows. May be involved in modulation of pathogen defense and leaf cell death. Activity seems to be regulated by Ca(2+)-dependent calmodulin binding and seems not to require heterotrimeric G proteins. The chain is MLO protein homolog 1 (MLO1) from Oryza sativa subsp. indica (Rice).